The chain runs to 332 residues: Adenosine deaminase (332 aa).

Zn(2+) contacts are provided by His-12 and His-14. Positions 14, 16, and 169 each coordinate substrate. Position 196 (His-196) interacts with Zn(2+). The active-site Proton donor is Glu-199. Asp-277 lines the Zn(2+) pocket.

It belongs to the metallo-dependent hydrolases superfamily. Adenosine and AMP deaminases family. Adenosine deaminase subfamily. The cofactor is Zn(2+).

The catalysed reaction is adenosine + H2O + H(+) = inosine + NH4(+). The enzyme catalyses 2'-deoxyadenosine + H2O + H(+) = 2'-deoxyinosine + NH4(+). Functionally, catalyzes the hydrolytic deamination of adenosine and 2-deoxyadenosine. This chain is Adenosine deaminase, found in Vibrio atlanticus (strain LGP32) (Vibrio splendidus (strain Mel32)).